A 161-amino-acid chain; its full sequence is Small ribosomal subunit protein uS9 (161 aa).

The segment covering 1-21 (MATLQSLADLNRANTQTSNPE) has biased composition (polar residues). Positions 1 to 25 (MATLQSLADLNRANTQTSNPENEAP) are disordered.

The protein belongs to the universal ribosomal protein uS9 family.

This chain is Small ribosomal subunit protein uS9, found in Methylorubrum extorquens (strain CM4 / NCIMB 13688) (Methylobacterium extorquens).